Reading from the N-terminus, the 529-residue chain is Zinc finger CCCH domain-containing protein 65 (529 aa).

A compositionally biased stretch (basic and acidic residues) spans 1 to 10 (MADADARAPP). Disordered stretches follow at residues 1–36 (MADA…EDEV) and 134–179 (PARK…GSYV). Low complexity predominate over residues 14 to 31 (PGATPIGSISPSSAAPAA). 3 consecutive C3H1-type zinc fingers follow at residues 108–136 (RPGE…HPAR), 237–265 (GSSQ…HRDG), and 285–313 (RPGE…HPDP). A disordered region spans residues 313–347 (PSNVASKDPQLEHENGDAPQQDVQGSSSQPNASIW). The span at 333 to 344 (QDVQGSSSQPNA) shows a compositional bias: polar residues. 2 consecutive C3H1-type zinc fingers follow at residues 433 to 461 (RPGQ…HPRS) and 477 to 505 (KPDQ…HPFN).

In Oryza sativa subsp. japonica (Rice), this protein is Zinc finger CCCH domain-containing protein 65.